The primary structure comprises 289 residues: Iron-sulfur cluster carrier protein (289 aa).

Low complexity predominate over residues 1-18 (MAEECSGNCDSCGSSSDC). The tract at residues 1–20 (MAEECSGNCDSCGSSSDCSD) is disordered. 48-55 (GKGGVGKS) serves as a coordination point for ATP.

Belongs to the Mrp/NBP35 ATP-binding proteins family. In terms of assembly, homodimer.

Functionally, binds and transfers iron-sulfur (Fe-S) clusters to target apoproteins. Can hydrolyze ATP. This chain is Iron-sulfur cluster carrier protein, found in Methanococcus maripaludis (strain DSM 14266 / JCM 13030 / NBRC 101832 / S2 / LL).